The following is a 467-amino-acid chain: Gamma-aminobutyric acid receptor subunit gamma-3 (467 aa).

Positions 1-17 (MAAKLLLLLCLFSGLHA) are cleaved as a signal peptide. Over 18–256 (RSRRVEEDDS…FELSRRMGYF (239 aa)) the chain is Extracellular. Asn-110 carries N-linked (GlcNAc...) asparagine glycosylation. A disulfide bridge links Cys-171 with Cys-185. Residue Asn-228 is glycosylated (N-linked (GlcNAc...) asparagine). The chain crosses the membrane as a helical span at residues 257–277 (TIQTYIPCILTVVLSWVSFWI). At 278–283 (KKDATP) the chain is on the cytoplasmic side. A helical transmembrane segment spans residues 284–303 (ARTTLGITTVLTMTTLSTIA). The Extracellular portion of the chain corresponds to 304–311 (RKSLPRVS). A helical membrane pass occupies residues 312–332 (YVTAMDLFVTVCFLFVFAALM). Residues 333–446 (EYATLNYYSS…DVSELDSYSR (114 aa)) are Cytoplasmic-facing. A helical membrane pass occupies residues 447-467 (VFFPTSFLLFNLVYWVGYLYL).

This sequence belongs to the ligand-gated ion channel (TC 1.A.9) family. Gamma-aminobutyric acid receptor (TC 1.A.9.5) subfamily. GABRG3 sub-subfamily. In terms of assembly, heteropentamer, formed by a combination of alpha (GABRA1-6), beta (GABRB1-3), gamma (GABRG1-3), delta (GABRD), epsilon (GABRE), rho (GABRR1-3), pi (GABRP) and theta (GABRQ) chains, each subunit exhibiting distinct physiological and pharmacological properties. In terms of processing, may be palmitoylated. Expressed in brain.

It is found in the postsynaptic cell membrane. Its subcellular location is the cell membrane. It catalyses the reaction chloride(in) = chloride(out). Allosterically potentiated by alphaxalone. Allosterically inhibited by pregnenolone sulfate. Inhibited by zinc and lanthanum. Functionally, gamma subunit of the heteropentameric ligand-gated chloride channel gated by gamma-aminobutyric acid (GABA), a major inhibitory neurotransmitter in the brain. GABA-gated chloride channels, also named GABA(A) receptors (GABAAR), consist of five subunits arranged around a central pore and contain GABA active binding site(s) located at the alpha and beta subunit interface(s). When activated by GABA, GABAARs selectively allow the flow of chloride across the cell membrane down their electrochemical gradient. This is Gamma-aminobutyric acid receptor subunit gamma-3 from Rattus norvegicus (Rat).